We begin with the raw amino-acid sequence, 183 residues long: uncharacterized protein (183 aa).

The protein to A.muscaria DOPA 4,5-dioxygenase.

This is an uncharacterized protein from Botryotinia fuckeliana (Noble rot fungus).